We begin with the raw amino-acid sequence, 204 residues long: Holliday junction branch migration complex subunit RuvA (204 aa).

The segment at 1–63 (MIGKLSGKAD…EEHIHLYGFL (63 aa)) is domain I. The tract at residues 64–142 (TLEEKNFFNL…KISSSSAIKD (79 aa)) is domain II. Positions 143–153 (SLNIKNITPVT) are flexible linker. The domain III stretch occupies residues 153–204 (TSNEVMKALINLGFSRFEAQNVVQGIITQNPKISIDELIKTALKNRNSKFFS).

The protein belongs to the RuvA family. In terms of assembly, homotetramer. Forms an RuvA(8)-RuvB(12)-Holliday junction (HJ) complex. HJ DNA is sandwiched between 2 RuvA tetramers; dsDNA enters through RuvA and exits via RuvB. An RuvB hexamer assembles on each DNA strand where it exits the tetramer. Each RuvB hexamer is contacted by two RuvA subunits (via domain III) on 2 adjacent RuvB subunits; this complex drives branch migration. In the full resolvosome a probable DNA-RuvA(4)-RuvB(12)-RuvC(2) complex forms which resolves the HJ.

The protein localises to the cytoplasm. The RuvA-RuvB-RuvC complex processes Holliday junction (HJ) DNA during genetic recombination and DNA repair, while the RuvA-RuvB complex plays an important role in the rescue of blocked DNA replication forks via replication fork reversal (RFR). RuvA specifically binds to HJ cruciform DNA, conferring on it an open structure. The RuvB hexamer acts as an ATP-dependent pump, pulling dsDNA into and through the RuvAB complex. HJ branch migration allows RuvC to scan DNA until it finds its consensus sequence, where it cleaves and resolves the cruciform DNA. In Rickettsia canadensis (strain McKiel), this protein is Holliday junction branch migration complex subunit RuvA.